Reading from the N-terminus, the 421-residue chain is Testin (421 aa).

One can recognise a PET domain in the interval 92 to 199 (MILTNPVAAK…GDVKLPREMD (108 aa)). Positions 133-164 (EKQPVAGSEGAQYRKKQLAKQLPAHDQDPSKC) are disordered. Over residues 155 to 164 (PAHDQDPSKC) the composition is skewed to basic and acidic residues. LIM zinc-binding domains are found at residues 234 to 297 (YSCY…CDSE), 299 to 359 (PRCA…NHAV), and 362 to 421 (QGCH…KMMS).

It belongs to the prickle / espinas / testin family. In terms of assembly, interacts via LIM domain 1 with ZYX. Interacts (via LIM domain 3) with ENAH and VASP. Interacts with ALKBH4, talin, actin, alpha-actinin, GRIP1 and PXN. Interacts (via LIM domain 2) with ACTL7A (via N-terminus). Heterodimer with ACTL7A; the heterodimer interacts with ENAH to form a heterotrimer.

The protein localises to the cytoplasm. Its subcellular location is the cell junction. It localises to the focal adhesion. In terms of biological role, scaffold protein that may play a role in cell adhesion, cell spreading and in the reorganization of the actin cytoskeleton. Plays a role in the regulation of cell proliferation. May act as a tumor suppressor. The polypeptide is Testin (TES) (Mustela putorius furo (European domestic ferret)).